Here is a 448-residue protein sequence, read N- to C-terminus: Phosphoglucosamine mutase (448 aa).

Residue S104 is the Phosphoserine intermediate of the active site. Residues S104, D243, D245, and D247 each coordinate Mg(2+). S104 is subject to Phosphoserine.

Belongs to the phosphohexose mutase family. Requires Mg(2+) as cofactor. Activated by phosphorylation.

The enzyme catalyses alpha-D-glucosamine 1-phosphate = D-glucosamine 6-phosphate. Catalyzes the conversion of glucosamine-6-phosphate to glucosamine-1-phosphate. This is Phosphoglucosamine mutase from Xylella fastidiosa (strain Temecula1 / ATCC 700964).